A 610-amino-acid chain; its full sequence is V-type proton ATPase catalytic subunit A (610 aa).

An ATP-binding site is contributed by 245 to 252 (GAFGCGKT).

Belongs to the ATPase alpha/beta chains family. In terms of assembly, V-ATPase is a heteromultimeric enzyme composed of a peripheral catalytic V1 complex (main components: subunits A, B, C, D, E, and F) attached to an integral membrane V0 proton pore complex (main component: the proteolipid protein).

The enzyme catalyses ATP + H2O + 4 H(+)(in) = ADP + phosphate + 5 H(+)(out). Catalytic subunit of the peripheral V1 complex of vacuolar ATPase. V-ATPase vacuolar ATPase is responsible for acidifying a variety of intracellular compartments in eukaryotic cells. This is V-type proton ATPase catalytic subunit A from Trypanosoma congolense.